The sequence spans 428 residues: 3-phosphoshikimate 1-carboxyvinyltransferase (428 aa).

3-phosphoshikimate-binding residues include K19, S20, and R24. Residue K19 coordinates phosphoenolpyruvate. Phosphoenolpyruvate contacts are provided by G91 and R119. 3-phosphoshikimate contacts are provided by S164, Q166, D312, and K339. Q166 provides a ligand contact to phosphoenolpyruvate. The active-site Proton acceptor is D312. Positions 343 and 386 each coordinate phosphoenolpyruvate.

This sequence belongs to the EPSP synthase family. Monomer.

It localises to the cytoplasm. It carries out the reaction 3-phosphoshikimate + phosphoenolpyruvate = 5-O-(1-carboxyvinyl)-3-phosphoshikimate + phosphate. The protein operates within metabolic intermediate biosynthesis; chorismate biosynthesis; chorismate from D-erythrose 4-phosphate and phosphoenolpyruvate: step 6/7. Functionally, catalyzes the transfer of the enolpyruvyl moiety of phosphoenolpyruvate (PEP) to the 5-hydroxyl of shikimate-3-phosphate (S3P) to produce enolpyruvyl shikimate-3-phosphate and inorganic phosphate. This chain is 3-phosphoshikimate 1-carboxyvinyltransferase, found in Bacillus pumilus (strain SAFR-032).